Reading from the N-terminus, the 185-residue chain is uncharacterized protein (185 aa).

An N-terminal signal peptide occupies residues 1–18 (MLLKLILILCFLVTLSLS). Positions 30–185 (TQGPTIASGG…VQDCGEITGW (156 aa)) are disordered. The segment covering 86 to 101 (RAQEGGKKDTTKEQPK) has biased composition (basic and acidic residues). Over residues 103–116 (NNNNKNLGRHSSSG) the composition is skewed to low complexity. Positions 117–135 (SGSGSGSGCGVTGDTGTGS) are enriched in gly residues.

It is found in the secreted. This is an uncharacterized protein from Dictyostelium discoideum (Social amoeba).